Reading from the N-terminus, the 78-residue chain is Colicin-V immunity protein (78 aa).

This protein is able to protect a cell, which harbors the plasmid ColV encoding colicin V, against colicin V. In Escherichia coli, this protein is Colicin-V immunity protein (cvi).